A 232-amino-acid polypeptide reads, in one-letter code: Large ribosomal subunit protein uL1 (232 aa).

Belongs to the universal ribosomal protein uL1 family. Part of the 50S ribosomal subunit.

Functionally, binds directly to 23S rRNA. The L1 stalk is quite mobile in the ribosome, and is involved in E site tRNA release. In terms of biological role, protein L1 is also a translational repressor protein, it controls the translation of the L11 operon by binding to its mRNA. The sequence is that of Large ribosomal subunit protein uL1 from Maricaulis maris (strain MCS10) (Caulobacter maris).